The chain runs to 121 residues: Large ribosomal subunit protein bL12 (121 aa).

It belongs to the bacterial ribosomal protein bL12 family. In terms of assembly, homodimer. Part of the ribosomal stalk of the 50S ribosomal subunit. Forms a multimeric L10(L12)X complex, where L10 forms an elongated spine to which 2 to 4 L12 dimers bind in a sequential fashion. Binds GTP-bound translation factors.

Forms part of the ribosomal stalk which helps the ribosome interact with GTP-bound translation factors. Is thus essential for accurate translation. This Lactobacillus delbrueckii subsp. bulgaricus (strain ATCC BAA-365 / Lb-18) protein is Large ribosomal subunit protein bL12.